A 448-amino-acid chain; its full sequence is Argininosuccinate synthase (448 aa).

ATP contacts are provided by residues 17–25 and alanine 43; that span reads AFSGGLDTS. Tyrosine 99 is an L-citrulline binding site. ATP contacts are provided by glycine 129 and threonine 131. Positions 131, 135, and 136 each coordinate L-aspartate. Residue asparagine 135 participates in L-citrulline binding. Aspartate 136 provides a ligand contact to ATP. Residues arginine 139 and serine 192 each coordinate L-citrulline. Residue aspartate 194 participates in ATP binding. L-citrulline contacts are provided by threonine 201, glutamate 203, and glutamate 280.

It belongs to the argininosuccinate synthase family. Type 2 subfamily. Homotetramer.

The protein localises to the cytoplasm. The enzyme catalyses L-citrulline + L-aspartate + ATP = 2-(N(omega)-L-arginino)succinate + AMP + diphosphate + H(+). It functions in the pathway amino-acid biosynthesis; L-arginine biosynthesis; L-arginine from L-ornithine and carbamoyl phosphate: step 2/3. This is Argininosuccinate synthase from Pectobacterium carotovorum subsp. carotovorum (strain PC1).